The following is a 209-amino-acid chain: COP9 signalosome complex subunit 8 (209 aa).

Positions Asp8 to Phe179 constitute a PCI domain. The residue at position 175 (Ser175) is a Phosphoserine.

Belongs to the CSN8 family. Component of the CSN complex, composed of COPS1/GPS1, COPS2, COPS3, COPS4, COPS5, COPS6, COPS7 (COPS7A or COPS7B), COPS8 and COPS9. In the complex, it probably interacts directly with COPS3, COPS4 and COPS7 (COPS7A or COPS7B). As to expression, widely expressed.

The protein localises to the cytoplasm. The protein resides in the nucleus. In terms of biological role, component of the COP9 signalosome complex (CSN), a complex involved in various cellular and developmental processes. The CSN complex is an essential regulator of the ubiquitin (Ubl) conjugation pathway by mediating the deneddylation of the cullin subunits of SCF-type E3 ligase complexes, leading to decrease the Ubl ligase activity of SCF-type complexes such as SCF, CSA or DDB2. The complex is also involved in phosphorylation of p53/TP53, c-jun/JUN, IkappaBalpha/NFKBIA, ITPK1 and IRF8/ICSBP, possibly via its association with CK2 and PKD kinases. CSN-dependent phosphorylation of TP53 and JUN promotes and protects degradation by the Ubl system, respectively. The protein is COP9 signalosome complex subunit 8 (Cops8) of Mus musculus (Mouse).